Reading from the N-terminus, the 209-residue chain is A-type ATP synthase subunit D (209 aa).

This sequence belongs to the V-ATPase D subunit family. In terms of assembly, has multiple subunits, A(3), B(3), C, D, E, F, G, I and K(x); there may be a few other subunits as well.

The protein localises to the cell membrane. Its function is as follows. Component of the A-type ATP synthase that produces ATP from ADP in the presence of a proton gradient across the membrane. The sequence is that of A-type ATP synthase subunit D from Methanosarcina mazei (strain ATCC BAA-159 / DSM 3647 / Goe1 / Go1 / JCM 11833 / OCM 88) (Methanosarcina frisia).